The chain runs to 207 residues: Sodium/potassium-transporting ATPase subunit beta-1-interacting protein 1 (207 aa).

The next 3 membrane-spanning stretches (helical) occupy residues 2-22 (GRCS…AAAL), 35-55 (APIL…LGTL), and 62-82 (LILY…IICF). An N-linked (GlcNAc...) asparagine glycan is attached at Asn100. A helical membrane pass occupies residues 147–167 (ALSSALQIFLALFGFVYACYV).

It belongs to the NKAIN family. Interacts with atp1b1 C-terminus.

The protein resides in the cell membrane. The protein is Sodium/potassium-transporting ATPase subunit beta-1-interacting protein 1 (nkain1) of Xenopus laevis (African clawed frog).